A 562-amino-acid polypeptide reads, in one-letter code: Furostanol glycoside 26-O-beta-glucosidase (562 aa).

The N-terminal 44 residues, 1 to 44 (MAAQLGLPLVSCHRGASQAASSSAHLVPGASAIMQAGNRRQKMR), are a transit peptide targeting the chloroplast. A beta-D-glucoside-binding positions include glutamine 110, histidine 214, and 259–260 (NE). Glutamate 260 acts as the Proton donor in catalysis. The cysteines at positions 279 and 285 are disulfide-linked. A beta-D-glucoside-binding positions include tyrosine 401, glutamate 472, tryptophan 518, 525–526 (EW), and phenylalanine 534. The active-site Nucleophile is the glutamate 472.

The protein belongs to the glycosyl hydrolase 1 family. In terms of assembly, heterodimer. The N-terminus of the larger subunit is blocked and the smaller subunit might be derived from the larger one.

It is found in the plastid. The protein resides in the chloroplast. It catalyses the reaction protodioscin + H2O = 26-deglucoprotodioscin + D-glucose. Partially inhibited by glucono-1,5-lactone, conduritol beta-epoxide and diosgenin, but not by beta-sitosterol or cholesterol. In terms of biological role, beta-glucosidase involved in saponin metabolism. Highly specific for the cleavage of C-26-bound glucose moiety of furostanol glycosides such as protogracillin and protodioscin. No activity with nuatigenin glycoside. Convers furostanol glycosides to spirostanol glycosides. This Hellenia speciosa (Crepe ginger) protein is Furostanol glycoside 26-O-beta-glucosidase.